A 69-amino-acid polypeptide reads, in one-letter code: Putative membrane protein insertion efficiency factor (69 aa).

It belongs to the UPF0161 family.

The protein resides in the cell membrane. Functionally, could be involved in insertion of integral membrane proteins into the membrane. This is Putative membrane protein insertion efficiency factor from Alkaliphilus metalliredigens (strain QYMF).